The following is a 1092-amino-acid chain: SUMO-specific isopeptidase USPL1 (1092 aa).

Disordered stretches follow at residues valine 145–serine 168 and threonine 185–threonine 207. Composition is skewed to polar residues over residues glutamate 148–isoleucine 163 and glycine 197–cysteine 206. The USP domain maps to valine 227–lysine 500. Cysteine 236 functions as the Nucleophile in the catalytic mechanism. An SUMO-binding region spans residues cysteine 236–valine 495. The active-site Proton acceptor is the histidine 456. 3 disordered regions span residues leucine 713–glutamate 749, glycine 797–cysteine 859, and alanine 904–asparagine 930. Over residues alanine 732–lysine 748 the composition is skewed to polar residues. The span at histidine 810–alanine 819 shows a compositional bias: basic residues. A compositionally biased stretch (pro residues) spans lysine 821–proline 832. The residue at position 909 (serine 909) is a Phosphoserine.

The protein belongs to the peptidase C19 family. As to quaternary structure, interacts with ELL.

The protein localises to the nucleus. The protein resides in the cajal body. Functionally, SUMO-specific isopeptidase involved in protein desumoylation. Specifically binds SUMO proteins with a higher affinity for SUMO2 and SUMO3 which it cleaves more efficiently. Also able to process full-length SUMO proteins to their mature forms. Plays a key role in RNA polymerase-II-mediated snRNA transcription in the Cajal bodies. Is a component of complexes that can bind to U snRNA genes. This is SUMO-specific isopeptidase USPL1 (USPL1) from Homo sapiens (Human).